The primary structure comprises 149 residues: MNLYGYFLLLIIVIAFIALLPLFSGIGTFKLTKPKSSATAQSATGKLGKREYLKKKLDHTNVLKFDLKDTEESLGHDSASASSASRKFEIDSKTGLKRRVIGQYNKDPNDFDFDIDDLINEDELDERREEEKKLKKYNGKKNEAYEGFV.

Topologically, residues 1-6 (MNLYGY) are lumenal. Residues 7 to 27 (FLLLIIVIAFIALLPLFSGIG) traverse the membrane as a helical; Signal-anchor for type II membrane protein segment. Residues 28-149 (TFKLTKPKSS…KKNEAYEGFV (122 aa)) are Cytoplasmic-facing.

Interacts with PMA1 and PSG1.

Its subcellular location is the endoplasmic reticulum membrane. The protein localises to the cytoplasmic vesicle. It is found in the COPI-coated vesicle membrane. The protein resides in the COPII-coated vesicle membrane. It localises to the golgi apparatus membrane. Functionally, specific cargo receptor protein for the plasma membrane ATPase PMA1 that acts with PSG1 to promote the transport and maturation of PMA1. EXP1 and PSG1 probably act sequentially to promote PMA1 sorting between the ER and the Golgi, with EXP1 promoting PMA1 export from the ER to the Golgi while PSG1 has a role in PMA1 maturation or quality control in the Golgi. In Saccharomyces cerevisiae (strain ATCC 204508 / S288c) (Baker's yeast), this protein is ER export of PMA1 protein 1.